An 80-amino-acid chain; its full sequence is RNA-binding protein KhpA (80 aa).

The KH domain occupies Gly-33–Gln-80.

Belongs to the KhpA RNA-binding protein family.

The protein resides in the cytoplasm. In terms of biological role, a probable RNA-binding protein. The sequence is that of RNA-binding protein KhpA from Mycobacterium bovis (strain ATCC BAA-935 / AF2122/97).